Here is a 156-residue protein sequence, read N- to C-terminus: Ribosome maturation factor RimP (156 aa).

Belongs to the RimP family.

The protein localises to the cytoplasm. Functionally, required for maturation of 30S ribosomal subunits. The polypeptide is Ribosome maturation factor RimP (Dictyoglomus thermophilum (strain ATCC 35947 / DSM 3960 / H-6-12)).